A 192-amino-acid polypeptide reads, in one-letter code: ATP synthase subunit b (192 aa).

Residues 7 to 27 (LLLVLGVMLLATGVALAAGGE) form a helical membrane-spanning segment.

Belongs to the ATPase B chain family. In terms of assembly, F-type ATPases have 2 components, F(1) - the catalytic core - and F(0) - the membrane proton channel. F(1) has five subunits: alpha(3), beta(3), gamma(1), delta(1), epsilon(1). F(0) has three main subunits: a(1), b(2) and c(10-14). The alpha and beta chains form an alternating ring which encloses part of the gamma chain. F(1) is attached to F(0) by a central stalk formed by the gamma and epsilon chains, while a peripheral stalk is formed by the delta and b chains.

It localises to the cell inner membrane. Functionally, f(1)F(0) ATP synthase produces ATP from ADP in the presence of a proton or sodium gradient. F-type ATPases consist of two structural domains, F(1) containing the extramembraneous catalytic core and F(0) containing the membrane proton channel, linked together by a central stalk and a peripheral stalk. During catalysis, ATP synthesis in the catalytic domain of F(1) is coupled via a rotary mechanism of the central stalk subunits to proton translocation. In terms of biological role, component of the F(0) channel, it forms part of the peripheral stalk, linking F(1) to F(0). The protein is ATP synthase subunit b of Oleidesulfovibrio alaskensis (strain ATCC BAA-1058 / DSM 17464 / G20) (Desulfovibrio alaskensis).